The following is a 519-amino-acid chain: Ribonuclease Y (519 aa).

Residues 3–23 form a helical membrane-spanning segment; sequence PLAILISILLSLFCLVVGYYV. The KH domain occupies 209–272; the sequence is TVSVVNLPND…ETARIALDKL (64 aa). The 94-residue stretch at 335–428 folds into the HD domain; that stretch reads VLKHSMEVAF…VAAADALSAA (94 aa).

This sequence belongs to the RNase Y family.

It localises to the cell membrane. In terms of biological role, endoribonuclease that initiates mRNA decay. The polypeptide is Ribonuclease Y (Bacillus licheniformis (strain ATCC 14580 / DSM 13 / JCM 2505 / CCUG 7422 / NBRC 12200 / NCIMB 9375 / NCTC 10341 / NRRL NRS-1264 / Gibson 46)).